The chain runs to 475 residues: uncharacterized protein (475 aa).

It to E.coli YihN.

This is an uncharacterized protein from Mycoplasma pneumoniae (strain ATCC 29342 / M129 / Subtype 1) (Mycoplasmoides pneumoniae).